A 697-amino-acid polypeptide reads, in one-letter code: Hormonally up-regulated neu tumor-associated kinase homolog (697 aa).

Residues 55 to 313 (YLIGRKLGEG…IQQALANRWL (259 aa)) form the Protein kinase domain. ATP contacts are provided by residues 61–69 (LGEGSFAKV) and lysine 84. Residue aspartate 179 is the Proton acceptor of the active site. Basic and acidic residues-rich tracts occupy residues 405–424 (KMNK…KRGE) and 460–473 (PVKE…ERES). Disordered regions lie at residues 405 to 480 (KMNK…LSPF) and 586 to 642 (DNTS…NCVR). Over residues 586-600 (DNTSPIKGHSNQASF) the composition is skewed to polar residues. Low complexity predominate over residues 607–626 (SPSSPESMSPTSPHSPHSPS). Positions 627 to 637 (CNNNISGNLGS) are enriched in polar residues.

Belongs to the protein kinase superfamily. CAMK Ser/Thr protein kinase family. SNF1 subfamily.

It carries out the reaction L-seryl-[protein] + ATP = O-phospho-L-seryl-[protein] + ADP + H(+). The catalysed reaction is L-threonyl-[protein] + ATP = O-phospho-L-threonyl-[protein] + ADP + H(+). This Xenopus tropicalis (Western clawed frog) protein is Hormonally up-regulated neu tumor-associated kinase homolog (hunk).